The sequence spans 967 residues: RNA polymerase-associated protein RapA (967 aa).

One can recognise a Helicase ATP-binding domain in the interval 163–337 (EVGQRTAPRV…FARLSLLDPD (175 aa)). ATP is bound at residue 176–183 (DEVGLGKT). The DEAH box motif lies at 283 to 286 (DEAH). One can recognise a Helicase C-terminal domain in the interval 489–660 (RLEWLITFLK…KFLQNPTALE (172 aa)).

It belongs to the SNF2/RAD54 helicase family. RapA subfamily. As to quaternary structure, interacts with the RNAP. Has a higher affinity for the core RNAP than for the holoenzyme. Its ATPase activity is stimulated by binding to RNAP.

In terms of biological role, transcription regulator that activates transcription by stimulating RNA polymerase (RNAP) recycling in case of stress conditions such as supercoiled DNA or high salt concentrations. Probably acts by releasing the RNAP, when it is trapped or immobilized on tightly supercoiled DNA. Does not activate transcription on linear DNA. Probably not involved in DNA repair. This Pasteurella multocida (strain Pm70) protein is RNA polymerase-associated protein RapA.